Reading from the N-terminus, the 608-residue chain is V-type ATP synthase subunit I (608 aa).

A run of 9 helical transmembrane segments spans residues 308-325 (ISFI…MIIG), 327-346 (AAYG…SFLL), 356-376 (GLIF…GTWF), 405-425 (IIFI…VWNF), 438-458 (IAQI…LNLI), 464-484 (FPMY…VFVF), 495-515 (CILK…SGFA), 517-537 (IISY…SASF), and 550-570 (IGLI…NIML).

Belongs to the V-ATPase 116 kDa subunit family.

It localises to the cell membrane. In terms of biological role, produces ATP from ADP in the presence of a proton gradient across the membrane. In Borreliella burgdorferi (strain ATCC 35210 / DSM 4680 / CIP 102532 / B31) (Borrelia burgdorferi), this protein is V-type ATP synthase subunit I (atpI).